The following is a 425-amino-acid chain: Proline--tRNA ligase (425 aa).

Belongs to the class-II aminoacyl-tRNA synthetase family. ProS type 2 subfamily. In terms of assembly, homodimer.

Its subcellular location is the cytoplasm. It carries out the reaction tRNA(Pro) + L-proline + ATP = L-prolyl-tRNA(Pro) + AMP + diphosphate. Its function is as follows. Catalyzes the attachment of proline to tRNA(Pro) in a two-step reaction: proline is first activated by ATP to form Pro-AMP and then transferred to the acceptor end of tRNA(Pro). The chain is Proline--tRNA ligase from Wolbachia sp. subsp. Brugia malayi (strain TRS).